The sequence spans 460 residues: Bifunctional protein GlmU (460 aa).

The interval 1-229 is pyrophosphorylase; sequence MTNYAIILAA…FNESLGVNDR (229 aa). Residues 8 to 11, Lys22, Gln72, and 77 to 78 each bind UDP-N-acetyl-alpha-D-glucosamine; these read LAAG and GT. Asp102 provides a ligand contact to Mg(2+). UDP-N-acetyl-alpha-D-glucosamine is bound by residues Gly139, Glu154, Asn169, and Asn227. Residue Asn227 coordinates Mg(2+). Residues 230 to 250 form a linker region; sequence VALAIAETVMRQRITQKHMVN. Residues 251–460 form an N-acetyltransferase region; the sequence is GVTFQNPETV…RLAHHPSRSK (210 aa). The UDP-N-acetyl-alpha-D-glucosamine site is built by Arg332 and Lys350. Residue His362 is the Proton acceptor of the active site. Residues Tyr365 and Asn376 each contribute to the UDP-N-acetyl-alpha-D-glucosamine site. Residues Ala379, 385–386, Ser404, Ala422, and Arg439 each bind acetyl-CoA; that span reads NY.

In the N-terminal section; belongs to the N-acetylglucosamine-1-phosphate uridyltransferase family. It in the C-terminal section; belongs to the transferase hexapeptide repeat family. Homotrimer. Requires Mg(2+) as cofactor.

It localises to the cytoplasm. The enzyme catalyses alpha-D-glucosamine 1-phosphate + acetyl-CoA = N-acetyl-alpha-D-glucosamine 1-phosphate + CoA + H(+). It catalyses the reaction N-acetyl-alpha-D-glucosamine 1-phosphate + UTP + H(+) = UDP-N-acetyl-alpha-D-glucosamine + diphosphate. It functions in the pathway nucleotide-sugar biosynthesis; UDP-N-acetyl-alpha-D-glucosamine biosynthesis; N-acetyl-alpha-D-glucosamine 1-phosphate from alpha-D-glucosamine 6-phosphate (route II): step 2/2. The protein operates within nucleotide-sugar biosynthesis; UDP-N-acetyl-alpha-D-glucosamine biosynthesis; UDP-N-acetyl-alpha-D-glucosamine from N-acetyl-alpha-D-glucosamine 1-phosphate: step 1/1. It participates in bacterial outer membrane biogenesis; LPS lipid A biosynthesis. In terms of biological role, catalyzes the last two sequential reactions in the de novo biosynthetic pathway for UDP-N-acetylglucosamine (UDP-GlcNAc). The C-terminal domain catalyzes the transfer of acetyl group from acetyl coenzyme A to glucosamine-1-phosphate (GlcN-1-P) to produce N-acetylglucosamine-1-phosphate (GlcNAc-1-P), which is converted into UDP-GlcNAc by the transfer of uridine 5-monophosphate (from uridine 5-triphosphate), a reaction catalyzed by the N-terminal domain. This is Bifunctional protein GlmU from Streptococcus pyogenes serotype M1.